A 106-amino-acid polypeptide reads, in one-letter code: Integration host factor subunit alpha (106 aa).

This sequence belongs to the bacterial histone-like protein family. As to quaternary structure, heterodimer of an alpha and a beta chain.

In terms of biological role, this protein is one of the two subunits of integration host factor, a specific DNA-binding protein that functions in genetic recombination as well as in transcriptional and translational control. The protein is Integration host factor subunit alpha of Nitrobacter winogradskyi (strain ATCC 25391 / DSM 10237 / CIP 104748 / NCIMB 11846 / Nb-255).